Consider the following 281-residue polypeptide: uncharacterized protein (281 aa).

This is an uncharacterized protein from Methanocaldococcus jannaschii (strain ATCC 43067 / DSM 2661 / JAL-1 / JCM 10045 / NBRC 100440) (Methanococcus jannaschii).